The following is a 366-amino-acid chain: Alanine racemase (366 aa).

The Proton acceptor; specific for D-alanine role is filled by K33. K33 carries the N6-(pyridoxal phosphate)lysine modification. R129 lines the substrate pocket. Catalysis depends on Y253, which acts as the Proton acceptor; specific for L-alanine. Position 301 (M301) interacts with substrate.

It belongs to the alanine racemase family. Pyridoxal 5'-phosphate is required as a cofactor.

The catalysed reaction is L-alanine = D-alanine. It participates in amino-acid biosynthesis; D-alanine biosynthesis; D-alanine from L-alanine: step 1/1. Functionally, catalyzes the interconversion of L-alanine and D-alanine. May also act on other amino acids. The polypeptide is Alanine racemase (alr) (Xanthomonas axonopodis pv. citri (strain 306)).